Reading from the N-terminus, the 418-residue chain is UDP-N-acetylglucosamine 1-carboxyvinyltransferase (418 aa).

Phosphoenolpyruvate is bound at residue 22–23; the sequence is KN. UDP-N-acetyl-alpha-D-glucosamine is bound at residue Arg-92. The active-site Proton donor is the Cys-116. Position 116 is a 2-(S-cysteinyl)pyruvic acid O-phosphothioketal (Cys-116). UDP-N-acetyl-alpha-D-glucosamine-binding positions include 121–125, Asp-305, and Leu-327; that span reads RPIDL.

This sequence belongs to the EPSP synthase family. MurA subfamily.

The protein localises to the cytoplasm. The catalysed reaction is phosphoenolpyruvate + UDP-N-acetyl-alpha-D-glucosamine = UDP-N-acetyl-3-O-(1-carboxyvinyl)-alpha-D-glucosamine + phosphate. Its pathway is cell wall biogenesis; peptidoglycan biosynthesis. Functionally, cell wall formation. Adds enolpyruvyl to UDP-N-acetylglucosamine. This Campylobacter jejuni subsp. jejuni serotype O:6 (strain 81116 / NCTC 11828) protein is UDP-N-acetylglucosamine 1-carboxyvinyltransferase.